An 82-amino-acid chain; its full sequence is Small ribosomal subunit protein uS17 (82 aa).

The protein belongs to the universal ribosomal protein uS17 family. As to quaternary structure, part of the 30S ribosomal subunit.

One of the primary rRNA binding proteins, it binds specifically to the 5'-end of 16S ribosomal RNA. This chain is Small ribosomal subunit protein uS17, found in Paracoccus denitrificans (strain Pd 1222).